The primary structure comprises 209 residues: Thymidine kinase (209 aa).

ATP-binding positions include 9–16 and 88–91; these read SAMNAGKT and DEAQ. The active-site Proton acceptor is the E89.

It belongs to the thymidine kinase family. In terms of assembly, homotetramer.

It localises to the cytoplasm. It catalyses the reaction thymidine + ATP = dTMP + ADP + H(+). The chain is Thymidine kinase from Xanthomonas oryzae pv. oryzae (strain MAFF 311018).